The chain runs to 291 residues: START domain-containing protein 10 (291 aa).

The residue at position 1 (Met-1) is an N-acetylmethionine. The tract at residues 1–20 is disordered; that stretch reads MEKLAASTEPQGPRPVLGRE. The region spanning 14 to 224 is the START domain; that stretch reads RPVLGRESVQ…MYKACLKYPE (211 aa). An N6-succinyllysine mark is found at Lys-94, Lys-197, and Lys-202. 2 positions are modified to phosphoserine: Ser-253 and Ser-259. Residues 260 to 291 form a disordered region; that stretch reads LENIDESAVAESREERMGGAGGEGSDDDTSLT. Ser-284 bears the Phosphoserine; by CK2 mark. Ser-289 carries the post-translational modification Phosphoserine.

Post-translationally, phosphorylation at Ser-284 by CK2 negatively regulates lipid transfer activity, possibly by decreasing membrane association.

It is found in the cell projection. Its subcellular location is the cilium. The protein resides in the flagellum. The protein localises to the cytoplasm. It localises to the membrane. Its function is as follows. May play metabolic roles in sperm maturation or fertilization. Phospholipid transfer protein that preferentially selects lipid species containing a palmitoyl or stearoyl chain on the sn-1 and an unsaturated fatty acyl chain (18:1 or 18:2) on the sn-2 position. Able to transfer phosphatidylcholine (PC) and phosphatidyetanolamline (PE) between membranes. This Homo sapiens (Human) protein is START domain-containing protein 10 (STARD10).